Consider the following 53-residue polypeptide: UPF0391 membrane protein BPSS2216 (53 aa).

The next 2 membrane-spanning stretches (helical) occupy residues Ala-5–Ala-25 and Ile-30–Val-50.

Belongs to the UPF0391 family.

The protein localises to the cell membrane. This chain is UPF0391 membrane protein BPSS2216, found in Burkholderia pseudomallei (strain K96243).